Consider the following 763-residue polypeptide: MRFNHFSIVDKNFDEQLAELDQLGFRWSVFWDEKKILKDFLIQSPSDMTALQATAELDVIEFLKSSIELDWEIFWNIALQLLDFVPNFDFEIGKAFEYAKNSNLPQIEAEMTTENIISAFYYLLCTRRKTGMILVEHWVSEGLLPLDNHYHFFNDKSLATFDSSLLEREVLWVESPVDSEQRGENDLIKIQIIRPKSTEKLPVVMTASPYHLGINDKANDLALHDMNVELEEKTSHEIHVEQKLPQKLSAKAKELPIVDKAPYRFTHGWTYSLNDYFLTRGFASIYVAGVGTRSSDGFQTSGDYQQIYSMTAVIDWLNGRARAYTSRKKTHEIKASWANGKVAMTGKSYLGTMAYGAATTGVEGLELILAEAGISSWYNYYRENGLVRSPGGFPGEDLDVLAALTYSRNLDGADFLKGNAEYEKRLAEMTAALDRKSGDYNQFWHDRNYLINTDKVKADVLIVHGLQDWNVTPEQAYNFWKALPEGHAKHAFLHRGAHIYMNSWQSIDFSETINAYFVAKLLDRDLNLNLPPVILQENSKDQVWTMMNDFGANTQIKLPLGKTAVSFAQFDNNYDDETFKKYSKDFNVFKKDLFENKANEAVIDLELPSMLTINGPVELELRLKLNDTKGFLSAQILDFGQKKRLEDKVRVKDFKVLDRGRNFMLDDLVELPLVESPYQLVTKGFTNLQNQSLLTVSDLKADEWFTIKFELQPTIYHLEKADKLRVILYSTDFEHTVRDNRKVTYEIDLSQSKLIIPIESVKN.

Catalysis depends on charge relay system residues S348, D468, and H498.

This sequence belongs to the peptidase S15 family. Homodimer.

It is found in the cytoplasm. It carries out the reaction Hydrolyzes Xaa-Pro-|- bonds to release unblocked, N-terminal dipeptides from substrates including Ala-Pro-|-p-nitroanilide and (sequentially) Tyr-Pro-|-Phe-Pro-|-Gly-Pro-|-Ile.. Its function is as follows. Removes N-terminal dipeptides sequentially from polypeptides having unsubstituted N-termini provided that the penultimate residue is proline. This Lactococcus lactis subsp. cremoris (Streptococcus cremoris) protein is Xaa-Pro dipeptidyl-peptidase (pepX).